The primary structure comprises 801 residues: MSNPDYCIPNFSQTVNERTIIDIFTICRYRSPLVVFCLSHNELAKKYAQDVSMSSGTHVHIIDGSVEITASLYRTFRTIATQLLGRMQIVVFVTVDKSVVSTQVMKSIAWAFRGSFVELRNQSVDSSTLVSKLENLVSFAPLYNVPKCGPDYYGPTVYSELLSLATNARTHWYATIDYSMFTRSVLTGFIAKYFNEEAVPIDKRIVSIVGYNPPYVWTCLRHGIRPTYIEKSLPNPGGKGPFGLILPVINELVLKSKVKYVMHNPQIKLLCLDTFMLSTSMNILYIGAYPATHLLSLQLNGWTILAFDPKITSDWTDAMAKATGAKVIGVNKEFDFKSFSVQANQLNMFQNSKLSVIDDTWVETDYEKFQAEKQAYFEWLIDRTSIDVRLISMKWNRSKDTSVSHLLALLPQPYGASIREMRAFFHKKGASDIKILAAETEKYMDDFTAMSVSDQINTQKFMHCMITTVGDALKMDLDGGRAVIASYSLSNSSNPKERVLKFLSDANKAKAMVVFGAPNTHRLAYAKKVGLVLDSAIKMSKDLITFSNPTGRRWRDYGYSQSELYDAGYVEITIDQMVAYSSDVYNGVGYFANSTYNDLFSWYIPKWYVHKRMLMQDIRLSPAALVKCFTTLIRNICYVPHETYYRFRGILVDKYLRSKNVDPSQYSIVGSGSKTFTVLNHFEVPHECGPLVFEASTDVNISGHLLSLAIAAHFVASPMILWAEQMKYMAVDRMLPPNLDKSLFFDNKVTPSGALQRWHSREEVLLAAEICESYAAMMLNNKHSPDIIGTLKSAINLVFKI.

This sequence belongs to the phytoreovirus protein P5 family.

It localises to the virion. It is found in the host cytoplasm. It carries out the reaction a 5'-end diphospho-ribonucleoside in mRNA + GTP + H(+) = a 5'-end (5'-triphosphoguanosine)-ribonucleoside in mRNA + diphosphate. Its pathway is mRNA processing; mRNA capping. Its function is as follows. Enzyme involved in mRNA capping (Potential). Binds to GTP and might have guanylyltransferase activity. Together with the RNA-directed RNA polymerase P1 and protein P7, forms an transcriptional complex positioned near the channels situated at each of the five-fold vertices of the core. This is Putative mRNA-capping enzyme P5 from Alopecurus aequalis (Barnyard grass).